Reading from the N-terminus, the 529-residue chain is Snake venom 5'-nucleotidase (529 aa).

Glycine 1 is a signal peptide. The Zn(2+) site is built by aspartate 12 and histidine 14. Cysteine 27 and cysteine 32 are disulfide-bonded. Zn(2+)-binding residues include aspartate 60, asparagine 92, histidine 195, and histidine 218. N-linked (GlcNAc...) asparagine glycans are attached at residues asparagine 308 and asparagine 322. Cystine bridges form between cysteine 328-cysteine 333 and cysteine 340-cysteine 362. Arginine 329 contributes to the AMP binding site. The AMP site is built by asparagine 365, arginine 370, and phenylalanine 393. Cysteine 452 and cysteine 455 are oxidised to a cystine. 2 residues coordinate AMP: phenylalanine 476 and aspartate 482. Residue serine 525 is the site of GPI-anchor amidated serine attachment. The propeptide at alanine 526–leucine 529 is removed in mature form.

This sequence belongs to the 5'-nucleotidase family. The cofactor is Zn(2+). In terms of processing, venom 5'-nucleotidases (or a part thereof) may be released into the venom via exosome-like vesicles. They may be attached via a GPI anchor to the membrane of these vesicles. Soluble forms of 5'-nucleotidase might be released by cleavage of the ectodomain in the exosome-like vesicles or venom gland cells. Expressed by the venom gland.

It localises to the membrane. The enzyme catalyses a ribonucleoside 5'-phosphate + H2O = a ribonucleoside + phosphate. Its function is as follows. Hydrolyzes nucleotides into nucleosides. Snake venom 5'-nucleotidases are widely distributed among venomous snake taxa, but there is a lack of information about their biological activities. They have been shown to inhibit platelet aggregation. This effect may be due to the liberation of inhibitory AMP or adenosine by its action on ADP released upon initiation of aggregation. Venom 5'-nucleotidases are also known to synergistically act in vivo with other toxins like ADPases, phospholipases, and disintegrins to exert a more pronounced anti-coagulant effect. The polypeptide is Snake venom 5'-nucleotidase (Naja atra (Chinese cobra)).